Here is a 313-residue protein sequence, read N- to C-terminus: Ribosomal protein uL3 glutamine methyltransferase (313 aa).

It belongs to the protein N5-glutamine methyltransferase family. PrmB subfamily.

The enzyme catalyses L-glutaminyl-[ribosomal protein uL3] + S-adenosyl-L-methionine = N(5)-methyl-L-glutaminyl-[ribosomal protein uL3] + S-adenosyl-L-homocysteine + H(+). Functionally, methylates large ribosomal subunit protein uL3 on a specific glutamine residue. The protein is Ribosomal protein uL3 glutamine methyltransferase of Pasteurella multocida (strain Pm70).